A 140-amino-acid chain; its full sequence is ATP synthase epsilon chain (140 aa).

It belongs to the ATPase epsilon chain family. F-type ATPases have 2 components, CF(1) - the catalytic core - and CF(0) - the membrane proton channel. CF(1) has five subunits: alpha(3), beta(3), gamma(1), delta(1), epsilon(1). CF(0) has three main subunits: a, b and c.

It localises to the cell inner membrane. Its function is as follows. Produces ATP from ADP in the presence of a proton gradient across the membrane. This chain is ATP synthase epsilon chain, found in Nitrosococcus oceani (strain ATCC 19707 / BCRC 17464 / JCM 30415 / NCIMB 11848 / C-107).